The chain runs to 943 residues: AP-1 complex subunit beta-1 (943 aa).

At lysine 318 the chain carries N6-acetyllysine. Tyrosine 574 carries the post-translational modification 3'-nitrotyrosine. The disordered stretch occupies residues glycine 584–valine 621. Residues proline 594–glycine 616 are compositionally biased toward low complexity.

The protein belongs to the adaptor complexes large subunit family. In terms of assembly, adaptor protein complex 1 (AP-1) is a heterotetramer composed of two large adaptins (gamma-type subunit AP1G1 and beta-type subunit AP1B1), a medium adaptin (mu-type subunit AP1M1 or AP1M2) and a small adaptin (sigma-type subunit AP1S1 or AP1S2 or AP1S3). As to expression, widely expressed.

Its subcellular location is the cytoplasmic vesicle. It is found in the clathrin-coated vesicle membrane. The protein localises to the golgi apparatus. Functionally, subunit of clathrin-associated adaptor protein complex 1 that plays a role in protein sorting in the late-Golgi/trans-Golgi network (TGN) and/or endosomes. The AP complexes mediate both the recruitment of clathrin to membranes and the recognition of sorting signals within the cytosolic tails of transmembrane cargo molecules. The sequence is that of AP-1 complex subunit beta-1 (Ap1b1) from Mus musculus (Mouse).